Consider the following 780-residue polypeptide: MEVEKYDLTLDFDIQKRTFNGTETITADAGDIVLDAVGLQINWMKVNGRDTAFTYDGQTVRAPGDSQPQKIEISFAGKVSDSLSGIYYAGRENGMITTHFEATDARRMFPCVDHPAYKAVFAITVVIDKDYDAISNMPPKRIEVSERKVVEFQDTPRMSTYLLYVGIGKFRYEYEKYRDIDLILASLKDIRSKYPLDMARKSVEFYENYFGIPYALPKMHLISVPEFGAGAMENWGAITFREIYMDIAENSAVTVKRNSANVIAHEIAHQWFGDLVTMKWWNDLWLNESFATFMSYKTMDTLFPEWSFWGDFFVSRTSGALRSDSLKNTHPIEVDVRDPDEISQIFDEISYGKGASILRMIEDYAGYEEFRKGISKYLNDHKFGNAEGSDLWTAIEDVSGKPVKRVMEYWIKNPGYPVIKLKRNGRKITMYQTRFLLNGEEEGRWPVPVNIKKKDGVERILLEDEASIEADGLIKINADSAGFYRVLYDDATFSDVMGHYRDLSPLDRIGLVDDLFAFLLSGHIDPETYRQRIRNFFDDEDHNVITAIVGQMEYLRMLTHAFDDDARAFCRSRMQFLTGKQDENLKIALGRVSRLYVMVDESYAEEMSKLFKDFDSAEPEMRSSIATAYALVTGDLKGLLEKFRSVDRDEDRVRIISAFGKLKSNTDLSTVYGMVEKTEIKKQDMISFFSSALETLPGREFIFANLDRIIRLVIRYFTGNRTASRTVEMMIPVIGLDHPDAEDIVRNIGSKNISMGLAKGIEMLAVNRKLVERIRQTAVK.

Residues glutamate 101 and 230-234 each bind substrate; that span reads GAMEN. Residue histidine 265 coordinates Zn(2+). Glutamate 266 serves as the catalytic Proton acceptor. Residues histidine 269 and glutamate 288 each coordinate Zn(2+).

This sequence belongs to the peptidase M1 family. As to quaternary structure, part of the tricorn proteolytic complex. It depends on Zn(2+) as a cofactor.

It localises to the cytoplasm. In terms of biological role, proteases F1, F2 and F3 degrade oligopeptides produced by Tricorn (themselves probably produced by the proteasome), yielding free amino acids. This chain is Tricorn protease-interacting factor F3 (trf3), found in Thermoplasma acidophilum (strain ATCC 25905 / DSM 1728 / JCM 9062 / NBRC 15155 / AMRC-C165).